The chain runs to 636 residues: 1-deoxy-D-xylulose-5-phosphate synthase (636 aa).

Residues His-74 and 115–117 each bind thiamine diphosphate; that span reads AHS. A Mg(2+)-binding site is contributed by Asp-146. Thiamine diphosphate is bound by residues 147 to 148, Asn-176, Tyr-287, and Glu-369; that span reads GS. Residue Asn-176 participates in Mg(2+) binding.

Belongs to the transketolase family. DXPS subfamily. Homodimer. Mg(2+) serves as cofactor. Requires thiamine diphosphate as cofactor.

It carries out the reaction D-glyceraldehyde 3-phosphate + pyruvate + H(+) = 1-deoxy-D-xylulose 5-phosphate + CO2. Its pathway is metabolic intermediate biosynthesis; 1-deoxy-D-xylulose 5-phosphate biosynthesis; 1-deoxy-D-xylulose 5-phosphate from D-glyceraldehyde 3-phosphate and pyruvate: step 1/1. Its function is as follows. Catalyzes the acyloin condensation reaction between C atoms 2 and 3 of pyruvate and glyceraldehyde 3-phosphate to yield 1-deoxy-D-xylulose-5-phosphate (DXP). The polypeptide is 1-deoxy-D-xylulose-5-phosphate synthase (Polaromonas naphthalenivorans (strain CJ2)).